The primary structure comprises 1145 residues: Trafficking protein particle complex subunit 10 (1145 aa).

The protein belongs to the TMEM1 family. In terms of assembly, part of the multisubunit TRAPP (transport protein particle) complex. Interacts with Shal (via C-terminal dendritic targeting motif). Co-expressed with Shal in the nervous system.

The protein localises to the golgi apparatus. It is found in the cis-Golgi network. Its subcellular location is the cell projection. The protein resides in the dendrite. It localises to the perikaryon. In terms of biological role, may play a role in vesicular transport from endoplasmic reticulum to Golgi. Has a role in one of the several mechanisms underlying dendritic localization of Shal channels. The polypeptide is Trafficking protein particle complex subunit 10 (SIDL) (Drosophila melanogaster (Fruit fly)).